The sequence spans 78 residues: Musculoskeletal embryonic nuclear protein 1 (78 aa).

Disordered stretches follow at residues Met1–Lys33 and Gln45–Gly78. The Nuclear localization signal signature appears at Pro6–Val14. The span at Val64–Gly78 shows a compositional bias: basic and acidic residues.

The protein belongs to the MUSTN1 family. In terms of tissue distribution, predominantly expressed in heart and skeletal muscle. Detected in skeletal muscle satellite cells where expression increases with cell proliferation.

Its subcellular location is the nucleus. Functionally, promotes the differentiation and proliferation of skeletal muscle satellite cells. The chain is Musculoskeletal embryonic nuclear protein 1 (MUSTN1) from Gallus gallus (Chicken).